The chain runs to 338 residues: DNA-directed RNA polymerase subunit alpha (338 aa).

Positions 1–234 (MIHKNWAELI…DQLSVFVNFD (234 aa)) are alpha N-terminal domain (alpha-NTD). Residues 250–338 (FDPRLLKKVD…DLAKRFDDQF (89 aa)) are alpha C-terminal domain (alpha-CTD).

Belongs to the RNA polymerase alpha chain family. As to quaternary structure, homodimer. The RNAP catalytic core consists of 2 alpha, 1 beta, 1 beta' and 1 omega subunit. When a sigma factor is associated with the core the holoenzyme is formed, which can initiate transcription.

It catalyses the reaction RNA(n) + a ribonucleoside 5'-triphosphate = RNA(n+1) + diphosphate. DNA-dependent RNA polymerase catalyzes the transcription of DNA into RNA using the four ribonucleoside triphosphates as substrates. The chain is DNA-directed RNA polymerase subunit alpha from Paracoccus denitrificans (strain Pd 1222).